Consider the following 60-residue polypeptide: Metallothionein-like protein EMB30 (60 aa).

Belongs to the metallothionein superfamily. Type 15 family.

Functionally, metallothioneins have a high content of cysteine residues that bind various heavy metals. In Picea glauca (White spruce), this protein is Metallothionein-like protein EMB30 (EMB30).